The sequence spans 35 residues: Cycloamanide F proprotein (35 aa).

Residues 1 to 10 (MSDINATRLP) constitute a propeptide that is removed on maturation. A cross-link (cyclopeptide (Ile-Pro)) is located at residues 11 to 18 (IVGILGLP). Positions 19–35 (CIGDDVNSTLTHGEDLC) are excised as a propeptide.

The protein belongs to the MSDIN fungal toxin family. Processed by the macrocyclase-peptidase enzyme POPB to yield a cyclic decapeptide. POPB first removes 10 residues from the N-terminus. Conformational trapping of the remaining peptide forces the enzyme to release this intermediate rather than proceed to macrocyclization. The enzyme rebinds the remaining peptide in a different conformation and catalyzes macrocyclization of the N-terminal 8 residues.

Its function is as follows. Cyclic octapeptide that belongs to the MSDIN-like toxin family responsible for a large number of food poisoning cases and deaths. Cycloaminide E is structurally related to other cycloamanides that are non-toxic to mammals but show immunosuppressive activity. The protein is Cycloamanide F proprotein of Amanita phalloides (Death cap).